Reading from the N-terminus, the 800-residue chain is Protein PET111, mitochondrial (800 aa).

It to yeast YHR160C.

It localises to the mitochondrion matrix. Functionally, required for translation of the mitochondrial gene for cytochrome c oxidase subunit II (COX2). The protein is Protein PET111, mitochondrial (PET111) of Saccharomyces cerevisiae (strain ATCC 204508 / S288c) (Baker's yeast).